The chain runs to 221 residues: Pleckstrin homology domain-containing family B member 2 (221 aa).

Positions 2-109 (AFVKSGWLLR…WKFTLQDSRT (108 aa)) constitute a PH domain. K20 lines the a 1,2-diacyl-sn-glycero-3-phospho-L-serine pocket.

In terms of tissue distribution, highly expressed in brain, retina, heart and kidney. Detected at lower levels in lung, muscle and nerve.

Its subcellular location is the recycling endosome membrane. Involved in retrograde transport of recycling endosomes. This chain is Pleckstrin homology domain-containing family B member 2 (Plekhb2), found in Mus musculus (Mouse).